The chain runs to 101 residues: Ubiquitin-related modifier 1 (101 aa).

A 1-thioglycine modification is found at Gly101. Residue Gly101 forms a Glycyl lysine isopeptide (Gly-Lys) (interchain with K-? in acceptor proteins) linkage.

This sequence belongs to the URM1 family. Component of a complex at least composed of URM1, CTU2/NCS2 and CTU1/ATPBD3. C-terminal thiocarboxylation occurs in 2 steps, it is first acyl-adenylated (-COAMP) via the hesA/moeB/thiF part of MOCS3, then thiocarboxylated (-COSH) via the rhodanese domain of MOCS3.

The protein localises to the cytoplasm. Its pathway is tRNA modification; 5-methoxycarbonylmethyl-2-thiouridine-tRNA biosynthesis. Functionally, acts as a sulfur carrier required for 2-thiolation of mcm(5)S(2)U at tRNA wobble positions of cytosolic tRNA(Lys), tRNA(Glu) and tRNA(Gln). Serves as sulfur donor in tRNA 2-thiolation reaction by being thiocarboxylated (-COSH) at its C-terminus by MOCS3. The sulfur is then transferred to tRNA to form 2-thiolation of mcm(5)S(2)U. Also acts as a ubiquitin-like protein (UBL) that is covalently conjugated via an isopeptide bond to lysine residues of target proteins such as MOCS3, ATPBD3, CTU2, USP15 and CAS. The thiocarboxylated form serves as substrate for conjugation and oxidative stress specifically induces the formation of UBL-protein conjugates. The polypeptide is Ubiquitin-related modifier 1 (Homo sapiens (Human)).